We begin with the raw amino-acid sequence, 1105 residues long: Integrator complex subunit 2 (1105 aa).

The chain crosses the membrane as a helical span at residues Phe822–Ala842.

This sequence belongs to the Integrator subunit 2 family. As to quaternary structure, belongs to the multiprotein complex Integrator, at least composed of IntS1, IntS2, IntS3, IntS4, omd/IntS5, IntS6, defl/IntS7, IntS8, IntS9, IntS10, IntS11, IntS12, asun/IntS13, IntS14 and IntS15. The core complex associates with protein phosphatase 2A subunits mts/PP2A and Pp2A-29B, to form the Integrator-PP2A (INTAC) complex.

It localises to the nucleus membrane. It is found in the nucleus. Component of the integrator complex, a multiprotein complex that terminates RNA polymerase II (Pol II) transcription in the promoter-proximal region of genes. The integrator complex provides a quality checkpoint during transcription elongation by driving premature transcription termination of transcripts that are unfavorably configured for transcriptional elongation: the complex terminates transcription by (1) catalyzing dephosphorylation of the C-terminal domain (CTD) of Pol II subunit Polr2A/Rbp1 and Spt5, and (2) degrading the exiting nascent RNA transcript via endonuclease activity. The integrator complex is also involved in the 3'-end processing of the U7 snRNA, and also the spliceosomal snRNAs U1, U2, U4 and U5. This Drosophila melanogaster (Fruit fly) protein is Integrator complex subunit 2.